Reading from the N-terminus, the 490-residue chain is Glutamyl-tRNA(Gln) amidotransferase subunit A (490 aa).

Catalysis depends on charge relay system residues K81 and S156. The active-site Acyl-ester intermediate is the S180.

It belongs to the amidase family. GatA subfamily. In terms of assembly, heterotrimer of A, B and C subunits.

It catalyses the reaction L-glutamyl-tRNA(Gln) + L-glutamine + ATP + H2O = L-glutaminyl-tRNA(Gln) + L-glutamate + ADP + phosphate + H(+). In terms of biological role, allows the formation of correctly charged Gln-tRNA(Gln) through the transamidation of misacylated Glu-tRNA(Gln) in organisms which lack glutaminyl-tRNA synthetase. The reaction takes place in the presence of glutamine and ATP through an activated gamma-phospho-Glu-tRNA(Gln). The chain is Glutamyl-tRNA(Gln) amidotransferase subunit A from Nocardia farcinica (strain IFM 10152).